The chain runs to 376 residues: Phytanoyl-CoA hydroxylase-interacting protein-like (376 aa).

Positions 52 to 161 (VPHNIKISNI…EIIEFCTADY (110 aa)) constitute a Fibronectin type-III domain.

This sequence belongs to the PHYHIP family.

May play a role in the development of the central system. The sequence is that of Phytanoyl-CoA hydroxylase-interacting protein-like (phyhipl) from Xenopus laevis (African clawed frog).